The primary structure comprises 99 residues: uncharacterized protein (99 aa).

This is an uncharacterized protein from Haemophilus influenzae (strain ATCC 51907 / DSM 11121 / KW20 / Rd).